A 202-amino-acid polypeptide reads, in one-letter code: Holliday junction branch migration complex subunit RuvA (202 aa).

Residues 1–64 are domain I; the sequence is MIGRLRGSLA…EDAHLLYGFY (64 aa). Residues 65-143 form a domain II region; it reads EKRERELFRE…AWEALPGTFT (79 aa). Residues 144–153 are flexible linker; sequence LVSNGPNQAE. A domain III region spans residues 154–202; the sequence is PVASAESDAVSALISLGYKPQEASKAVSAIKEKDLSSADLIRRALKGMG.

Belongs to the RuvA family. In terms of assembly, homotetramer. Forms an RuvA(8)-RuvB(12)-Holliday junction (HJ) complex. HJ DNA is sandwiched between 2 RuvA tetramers; dsDNA enters through RuvA and exits via RuvB. An RuvB hexamer assembles on each DNA strand where it exits the tetramer. Each RuvB hexamer is contacted by two RuvA subunits (via domain III) on 2 adjacent RuvB subunits; this complex drives branch migration. In the full resolvosome a probable DNA-RuvA(4)-RuvB(12)-RuvC(2) complex forms which resolves the HJ.

The protein resides in the cytoplasm. Functionally, the RuvA-RuvB-RuvC complex processes Holliday junction (HJ) DNA during genetic recombination and DNA repair, while the RuvA-RuvB complex plays an important role in the rescue of blocked DNA replication forks via replication fork reversal (RFR). RuvA specifically binds to HJ cruciform DNA, conferring on it an open structure. The RuvB hexamer acts as an ATP-dependent pump, pulling dsDNA into and through the RuvAB complex. HJ branch migration allows RuvC to scan DNA until it finds its consensus sequence, where it cleaves and resolves the cruciform DNA. This is Holliday junction branch migration complex subunit RuvA from Pseudomonas syringae pv. syringae (strain B728a).